The primary structure comprises 422 residues: MEPCSCDTFVALPPATIDNRIIFGKNSDRPCDEVQEVVYFPAAVHDNLKEHLKCTYIEIDQVPETYAVVLSRPAWLWGAEMGANEHGVCIGNEAVWGREKVCDEEALLGMDLVRLGLERGDTAEKALNVIVDLLEKYGQGGNCSEGRMVFSYHNSFLIADRNEAWILETAGKYWAAEKVEEGVRNISNQLSIMTKIDREHPDMRNYAKQRGWWDGKKEFDFAATYSYLDTAKMMISPGRYCEGYKLLNKHKGNITFETMVEILRDKPSGINMEGEFLTTASMVSILPQDSKLPCIHFFTGTPDPERSVFKPFIFVPNISQLLNTSSPTFELEDSVGKKLQFNSKPDRRHPLYQKHQQALEILDNKTEKAKTMLDNMRKLEKELFKEMESVLQNKHLQVDKIVNLLHQCTEDEIRIYKSNVSS.

A propeptide spanning residues 1 to 5 (MEPCS) is cleaved from the precursor. The active site involves Cys6. Glyoxylic acid (Cys); alternate is present on Cys6. Cys6 is modified (pyruvic acid (Cys); alternate).

It belongs to the peptidase C69 family. Secernin subfamily.

Functionally, plays a role in thermal nociception. The protein is Secernin-3 (SCRN3) of Bos taurus (Bovine).